The sequence spans 108 residues: DNA-binding protein HBbu (108 aa).

The protein belongs to the bacterial histone-like protein family.

Histone-like DNA-binding protein which is capable of wrapping DNA to stabilize it, and thus to prevent its denaturation under extreme environmental conditions. In Borrelia garinii subsp. bavariensis (strain ATCC BAA-2496 / DSM 23469 / PBi) (Borreliella bavariensis), this protein is DNA-binding protein HBbu (hbb).